We begin with the raw amino-acid sequence, 602 residues long: MSKKKTNRKNNIDDIKNQLQNAKTELKNGTFFFTGKMSIFEFANKTNLNANEIVKNFFLAGKLYNINHILEEEEIAQLCIENNFEFSKETKIDGTNFLDEISFEDKPEDLIKRAPIITIMGHVDHGKTSLIDKIRNSNITKSESSGITQHTGAYQIVHKNQKITFIDTPGHEAFSAMRARGANVTDIVVLVVAADDGVMPQTVEAIKHCKNANVPIIVFVNKMDKPNKDLDKLKGQLAENGVVIEEYGGSVQTAYGSALKNEGIKELFDEILLLCEVLDLKANPKRFPIGTVIESRVDKRIGALTTIIVQNGTLYKGDFLLVGSQYSKIRTLSDENGNAMDSIEPGCPAVVTGFKIPPTAGSKFVGINDEKFAKRLASEKNYQEKINNLYSLSNSNNNSGGKKVINVIIKSDTNGTAEAIKNQLEYLENDEAKIKVISSNVGDITENDLMLAKASDSIIFTFNLKVLPTIRENLKVKKITLISHNVIYKIIEDCKLILDEHVTPIYEEKKIGQAHVIKIFTYSKLGTIAGSMQDTGVVRLGAKVKVYRKNKLIHEGFVQTLKRNLNEVKEVEKGKDFGTHLKDFNNIEVDDVLEFYEDVRVN.

A tr-type G domain is found at 112 to 281 (KRAPIITIMG…LLLCEVLDLK (170 aa)). Residues 121 to 128 (GHVDHGKT) are G1. 121–128 (GHVDHGKT) serves as a coordination point for GTP. Residues 146–150 (GITQH) form a G2 region. Residues 167 to 170 (DTPG) are G3. GTP-binding positions include 167 to 171 (DTPGH) and 221 to 224 (NKMD). Residues 221–224 (NKMD) are G4. Residues 257-259 (SAL) are G5.

It belongs to the TRAFAC class translation factor GTPase superfamily. Classic translation factor GTPase family. IF-2 subfamily.

It localises to the cytoplasm. Its function is as follows. One of the essential components for the initiation of protein synthesis. Protects formylmethionyl-tRNA from spontaneous hydrolysis and promotes its binding to the 30S ribosomal subunits. Also involved in the hydrolysis of GTP during the formation of the 70S ribosomal complex. The chain is Translation initiation factor IF-2 from Mycoplasmopsis synoviae (strain 53) (Mycoplasma synoviae).